A 492-amino-acid chain; its full sequence is 2,3-bisphosphoglycerate-independent phosphoglycerate mutase (492 aa).

Mn(2+) is bound by residues aspartate 11 and serine 61. The Phosphoserine intermediate role is filled by serine 61. Residues histidine 118, arginine 147–aspartate 148, arginine 177, arginine 183, arginine 248–arginine 251, and lysine 321 each bind substrate. Mn(2+) is bound by residues aspartate 387, histidine 391, aspartate 428, histidine 429, and histidine 446.

It belongs to the BPG-independent phosphoglycerate mutase family. Monomer. Requires Mn(2+) as cofactor.

It catalyses the reaction (2R)-2-phosphoglycerate = (2R)-3-phosphoglycerate. The protein operates within carbohydrate degradation; glycolysis; pyruvate from D-glyceraldehyde 3-phosphate: step 3/5. In terms of biological role, catalyzes the interconversion of 2-phosphoglycerate and 3-phosphoglycerate. In Wolinella succinogenes (strain ATCC 29543 / DSM 1740 / CCUG 13145 / JCM 31913 / LMG 7466 / NCTC 11488 / FDC 602W) (Vibrio succinogenes), this protein is 2,3-bisphosphoglycerate-independent phosphoglycerate mutase.